We begin with the raw amino-acid sequence, 258 residues long: MDGIIEQKSVLVHSKISDAGKRNGLINTRNFMAESRDGLVSVYPAPQYQSHRLVASAAPGSLEGGRSEPVQQLLDPNTLQQSVESHYRPNIILYSDGVLRSWGDGVATDCCETTFIEDRSPTKDSLEYPDGKFIDLSGDDIKIHTLSYDVEEEEELQELESDYSSDTESEDNFLMMPPRDHLGLSVFSMLCCFWPLGIAAFYLSHETNKAVAKGDFHQASTSSRRALFLAVLSITIGTGIYVGVAVALIAYLSKNNHL.

Over 1–181 (MDGIIEQKSV…NFLMMPPRDH (181 aa)) the chain is Cytoplasmic. The residue at position 137 (Ser137) is a Phosphoserine. The helical transmembrane segment at 182–202 (LGLSVFSMLCCFWPLGIAAFY) threads the bilayer. Over 203-228 (LSHETNKAVAKGDFHQASTSSRRALF) the chain is Extracellular. Residues 229 to 249 (LAVLSITIGTGIYVGVAVALI) constitute an intramembrane region (helical). Residues 250–258 (AYLSKNNHL) are Extracellular-facing.

Belongs to the CD225/Dispanin family. Homodimer. Interacts with GRIA1 and GRIA2. As to expression, brain-specific. Expressed in Purkinje neurons in cerebellum. Also detected in the hippocampus. Found at excitatory synapses and postsynaptic cells.

It is found in the cell membrane. The protein localises to the early endosome membrane. It localises to the postsynaptic density membrane. The protein resides in the synapse. Its subcellular location is the cell projection. It is found in the dendrite. The protein localises to the dendritic spine. May regulate AMPA receptor content at nascent synapses, and have a role in postsynaptic development and maturation. The protein is Synapse differentiation-inducing gene protein 1 (Syndig1) of Mus musculus (Mouse).